The sequence spans 70 residues: Small ribosomal subunit protein bS21 (70 aa).

It belongs to the bacterial ribosomal protein bS21 family.

The protein is Small ribosomal subunit protein bS21 of Helicobacter pylori (strain P12).